Consider the following 163-residue polypeptide: MLLAIKEFFNSLLLKELFKGLALTGRYLFARKITVLFPEEKTPLSPRFRGLHALRRYPNGEERCIACKLCEAVCPALAITIESDQRDDGTRRTTRYDIDLTKCIFCGFCEEACPVDAIVETHILEYHGEKRGDLYFTKDMLLAVGDRFEPEIAANKAADAKYR.

2 consecutive 4Fe-4S ferredoxin-type domains span residues 54–84 (LRRY…IESD) and 94–123 (TRYD…ETHI). [4Fe-4S] cluster contacts are provided by C64, C67, C70, C74, C103, C106, C109, and C113.

This sequence belongs to the complex I 23 kDa subunit family. As to quaternary structure, NDH-1 is composed of 14 different subunits. Subunits NuoA, H, J, K, L, M, N constitute the membrane sector of the complex. It depends on [4Fe-4S] cluster as a cofactor.

The protein resides in the cell inner membrane. It catalyses the reaction a quinone + NADH + 5 H(+)(in) = a quinol + NAD(+) + 4 H(+)(out). Its function is as follows. NDH-1 shuttles electrons from NADH, via FMN and iron-sulfur (Fe-S) centers, to quinones in the respiratory chain. The immediate electron acceptor for the enzyme in this species is believed to be ubiquinone. Couples the redox reaction to proton translocation (for every two electrons transferred, four hydrogen ions are translocated across the cytoplasmic membrane), and thus conserves the redox energy in a proton gradient. This Ralstonia nicotianae (strain ATCC BAA-1114 / GMI1000) (Ralstonia solanacearum) protein is NADH-quinone oxidoreductase subunit I.